The primary structure comprises 289 residues: Shikimate dehydrogenase (NADP(+)) (289 aa).

Shikimate is bound by residues 22–24 (SRS) and threonine 69. Lysine 73 serves as the catalytic Proton acceptor. Position 85 (glutamate 85) interacts with NADP(+). The shikimate site is built by asparagine 94 and aspartate 109. NADP(+) contacts are provided by residues 134–138 (GAGGA), 158–163 (NRTLSR), and isoleucine 226. Tyrosine 228 contacts shikimate. Glycine 249 serves as a coordination point for NADP(+).

It belongs to the shikimate dehydrogenase family. As to quaternary structure, homodimer.

It catalyses the reaction shikimate + NADP(+) = 3-dehydroshikimate + NADPH + H(+). Its pathway is metabolic intermediate biosynthesis; chorismate biosynthesis; chorismate from D-erythrose 4-phosphate and phosphoenolpyruvate: step 4/7. Its function is as follows. Involved in the biosynthesis of the chorismate, which leads to the biosynthesis of aromatic amino acids. Catalyzes the reversible NADPH linked reduction of 3-dehydroshikimate (DHSA) to yield shikimate (SA). The protein is Shikimate dehydrogenase (NADP(+)) of Brucella melitensis biotype 2 (strain ATCC 23457).